Consider the following 604-residue polypeptide: Pescadillo homolog (604 aa).

The interval 275 to 299 is disordered; sequence NSEPAGLIEDKEGEDNKESSKTDES. Positions 282–299 are enriched in basic and acidic residues; sequence IEDKEGEDNKESSKTDES. The 91-residue stretch at 337-427 folds into the BRCT domain; sequence ECRSLFKNLK…IILPTEGYIV (91 aa). Disordered stretches follow at residues 518 to 557 and 574 to 604; these read KTFS…DAAD and IEIN…AKGR. 2 stretches are compositionally biased toward basic and acidic residues: residues 531–557 and 577–586; these read VVDK…DAAD and NQERKKDKVN.

This sequence belongs to the pescadillo family.

Its subcellular location is the nucleus. It is found in the nucleolus. It localises to the nucleoplasm. Required for maturation of ribosomal RNAs and formation of the large ribosomal subunit. The protein is Pescadillo homolog (PES) of Oryza sativa subsp. japonica (Rice).